The chain runs to 504 residues: MEHGFVALVGAGPGDKGLITIRGAELLSQADVVVYDRLVSQEIIKMIPTTAEKIDVGKENKFHPVKQEEINHILLEKSLEGKKVIRLKGGDPFVFGRGGEELELLYENNIPFEVVPGVTSAVAALCYGGIPATHRDFCSSLHIITGHAREGGQLSIPFHELKELNGTIVFLMGDSSLSYLMNGLINAGMEKDMPAAIVENGTRPNQRKLVATVGTLEQKALEMEIKSPAIIAVGKVCSLSEKFSWFMKKPLFGTKILVTRPKESSGTLVEKLRQLGAEPVEYPCIEVVPIPQNEKLYHACENIREYGWILLTSKNGIQIFFDYLNSKGLDARVLANTKIGTVGSQTAKALKEVGLISDFTPEIFDGRHLALGIAERVGENEKVLICDAAIASDDIVNILRSNNIKFDRVPLYNTNYINENSNKVKKSIVHGELKYITFTSASTVEGFIASMKDIPLESLTAVCIGNKTAEAAKKYNLRYVVAEKSTIDSMIDKLLEIGGGNIYD.

The interval 1–248 is uroporphyrinogen-III C-methyltransferase; it reads MEHGFVALVG…LSEKFSWFMK (248 aa). Residues 249–504 are uroporphyrinogen-III synthase; it reads KPLFGTKILV…LEIGGGNIYD (256 aa).

This sequence in the N-terminal section; belongs to the precorrin methyltransferase family. It in the C-terminal section; belongs to the uroporphyrinogen-III synthase family.

The catalysed reaction is uroporphyrinogen III + 2 S-adenosyl-L-methionine = precorrin-2 + 2 S-adenosyl-L-homocysteine + H(+). It carries out the reaction hydroxymethylbilane = uroporphyrinogen III + H2O. The protein operates within cofactor biosynthesis; adenosylcobalamin biosynthesis; precorrin-2 from uroporphyrinogen III: step 1/1. Its pathway is porphyrin-containing compound metabolism; siroheme biosynthesis; precorrin-2 from uroporphyrinogen III: step 1/1. Functionally, may catalyze sequential reactions to synthesize uroporphyrinogen III from hydroxymethylbilane (HMB) and then precorrin-2, which are intermediate compounds in both vitamin B12 and siroheme biosyntheses. The chain is Porphyrin biosynthesis protein HemD (hemD) from Ruminiclostridium josui (Clostridium josui).